Consider the following 276-residue polypeptide: SKA complex subunit 1 homolog (276 aa).

The stretch at 48-78 (VDVSLTAMEAQLQAVRRRLQEEREAFPKAKK) forms a coiled coil.

The protein belongs to the SKA1 family.

This Oryza sativa subsp. indica (Rice) protein is SKA complex subunit 1 homolog.